A 120-amino-acid polypeptide reads, in one-letter code: Nitrogen regulatory protein GlnK3 (120 aa).

ADP contacts are provided by residues Thr40 and 48–50; that span reads GEQ. Residues Thr40 and 48–50 contribute to the ATP site; that span reads GEQ. Residues 48–52 and Lys69 contribute to the 2-oxoglutarate site; that span reads GEQKG. Residues Val75 and 98-101 contribute to the ADP site; that span reads GDGR. ATP contacts are provided by residues Val75 and 98–101; that span reads GDGR. Residue Gly98 coordinates 2-oxoglutarate.

It belongs to the P(II) protein family. As to quaternary structure, homotrimer. Interacts and forms a complex with Amt3.

Its subcellular location is the cytoplasm. With respect to regulation, activity is influenced by intracellular pools of the effector molecules ATP, ADP and 2-oxoglutarate. It senses the cellular nitrogen status through 2-oxoglutarate, and the energy level of the cell by binding both ATP and ADP with different affinities. ATP and 2-oxoglutarate prohibit binding to Amt3. ADP promotes the complex formation. In terms of biological role, involved in the regulation of nitrogen metabolism. Regulates the activity of its targets by protein-protein interaction in response to the nitrogen status of the cell. Regulates the activity of the ammonia channel Amt3 via direct interaction. This Archaeoglobus fulgidus (strain ATCC 49558 / DSM 4304 / JCM 9628 / NBRC 100126 / VC-16) protein is Nitrogen regulatory protein GlnK3.